The following is a 227-amino-acid chain: 4-nitrobenzoate reductase (227 aa).

Position 15 to 19 (15 to 19) interacts with FMN; it reads RRAVR. Residues Ser-45, Tyr-102, and Ile-107 each contribute to the NAD(+) site. Arg-213 is an FMN binding site.

Belongs to the nitroreductase family. The cofactor is FMN.

It catalyses the reaction 4-nitrobenzoate + 2 NADH + 2 H(+) = 4-hydroxylaminobenzoate + 2 NAD(+) + H2O. Nitroreductase involved in the degradation of nitroaromatic compounds. Catalyzes the conversion of 4-nitrobenzoate to 4-hydroxylaminobenzoate. Required for the catabolism of 4-nitrotoluene. The chain is 4-nitrobenzoate reductase from Pseudomonas putida (Arthrobacter siderocapsulatus).